A 197-amino-acid polypeptide reads, in one-letter code: Putative methyltransferase Mtx subunit A (197 aa).

The protein belongs to the MtrA family. In terms of assembly, may be part of a complex composed of 3 subunits; MtxA, MtxH and MtxX.

This Methanosarcina barkeri (strain Fusaro / DSM 804) protein is Putative methyltransferase Mtx subunit A (mtxA).